The following is a 596-amino-acid chain: Merlin (596 aa).

S13 carries the post-translational modification Phosphoserine. Residues 22 to 311 (FTVRIVTMDA…GNHDLFMRRR (290 aa)) form the FERM domain. Position 518 is a phosphoserine; by PAK (S518). Residues 560-580 (VLHSESSDRGGPSSKHNTIKK) form a disordered region.

Interacts with NHERF1, HGS and AGAP2. Interacts with SGSM3. Interacts (via FERM domain) with MPP1. Interacts with LAYN. Interacts with WWC1. Interacts with the CUL4A-RBX1-DDB1-VprBP/DCAF1 E3 ubiquitin-protein ligase complex. The unphosphorylated form interacts (via FERM domain) with VPRBP/DCAF1. Interacts (via FERM domain) with NOP53; the interaction is direct. Interacts with SCHIP1; the interaction is direct. Post-translationally, phosphorylation of Ser-518 inhibits nuclear localization by disrupting the intramolecular association of the FERM domain with the C-terminal tail. The dephosphorylation of Ser-518 favors the interaction with NOP53. Ubiquitinated by the CUL4A-RBX1-DDB1-DCAF1/VprBP E3 ubiquitin-protein ligase complex for ubiquitination and subsequent proteasome-dependent degradation.

The protein resides in the cell membrane. Its subcellular location is the cell projection. It is found in the cytoplasm. The protein localises to the cytoskeleton. It localises to the nucleus. Functionally, probable regulator of the Hippo/SWH (Sav/Wts/Hpo) signaling pathway, a signaling pathway that plays a pivotal role in tumor suppression by restricting proliferation and promoting apoptosis. Along with WWC1 can synergistically induce the phosphorylation of LATS1 and LATS2 and can probably function in the regulation of the Hippo/SWH (Sav/Wts/Hpo) signaling pathway. May act as a membrane stabilizing protein. May inhibit PI3 kinase by binding to AGAP2 and impairing its stimulating activity. Suppresses cell proliferation and tumorigenesis by inhibiting the CUL4A-RBX1-DDB1-VprBP/DCAF1 E3 ubiquitin-protein ligase complex. Plays a role in lens development and is required for complete fiber cell terminal differentiation, maintenance of cell polarity and separation of the lens vesicle from the corneal epithelium. The sequence is that of Merlin (Nf2) from Mus musculus (Mouse).